A 746-amino-acid polypeptide reads, in one-letter code: Exostosin-1 (746 aa).

Over 1–5 (MQAKK) the chain is Cytoplasmic. A helical; Signal-anchor for type II membrane protein transmembrane segment spans residues 6–26 (RYFILLSAGSCLALLFYFGGV). Residues 27 to 746 (QFRASRSHSR…RKKYRDIERL (720 aa)) lie on the Lumenal side of the membrane. Asn-89 carries an N-linked (GlcNAc...) asparagine glycan. 2 disulfides stabilise this stretch: Cys-98–Cys-103 and Cys-109–Cys-152. A protein-binding residues include Leu-166 and Tyr-203. Residues Lys-267, Lys-269, Tyr-271, and Arg-280 each coordinate UDP. A disulfide bond links Cys-298 and Cys-312. His-300 serves as a coordination point for a protein. UDP is bound by residues Tyr-319 and Tyr-324. A glycan (N-linked (GlcNAc...) asparagine) is linked at Asn-330. 2 disulfides stabilise this stretch: Cys-334-Cys-355 and Cys-652-Cys-704. Residues Arg-346 and Glu-349 each contribute to the UDP site.

Belongs to the glycosyltransferase 47 family. In terms of assembly, part of the heparan sulfate polymerase, a dimeric complex composed of EXT1 and EXT2. Could also form homooligomeric complexes. Interacts with NDST1. N-glycosylated.

It is found in the golgi apparatus membrane. Its subcellular location is the golgi apparatus. The protein resides in the cis-Golgi network membrane. The protein localises to the endoplasmic reticulum membrane. It catalyses the reaction 3-O-{alpha-D-GlcNAc-[(1-&gt;4)-beta-D-GlcA-(1-&gt;4)-alpha-D-GlcNAc](n)-(1-&gt;4)-beta-D-GlcA-(1-&gt;3)-beta-D-Gal-(1-&gt;3)-beta-D-Gal-(1-&gt;4)-beta-D-Xyl}-L-seryl-[protein] + UDP-alpha-D-glucuronate = 3-O-{[(1-&gt;4)-beta-D-GlcA-(1-&gt;4)-alpha-D-GlcNAc](n+1)-(1-&gt;4)-beta-D-GlcA-(1-&gt;3)-beta-D-Gal-(1-&gt;3)-beta-D-Gal-(1-&gt;4)-beta-D-Xyl}-L-seryl-[protein] + UDP + H(+). It functions in the pathway protein modification; protein glycosylation. Its function is as follows. Glycosyltransferase forming with EXT2 the heterodimeric heparan sulfate polymerase which catalyzes the elongation of the heparan sulfate glycan backbone. Glycan backbone extension consists in the alternating transfer of (1-&gt;4)-beta-D-GlcA and (1-&gt;4)-alpha-D-GlcNAc residues from their respective UDP-sugar donors. Both EXT1 and EXT2 are required for the full activity of the polymerase since EXT1 bears the N-acetylglucosaminyl-proteoglycan 4-beta-glucuronosyltransferase activity within the complex while EXT2 carries the glucuronosyl-N-acetylglucosaminyl-proteoglycan 4-alpha-N-acetylglucosaminyltransferase activity. Heparan sulfate proteoglycans are ubiquitous components of the extracellular matrix and play an important role in tissue homeostasis and signaling. The protein is Exostosin-1 of Cricetulus griseus (Chinese hamster).